A 128-amino-acid polypeptide reads, in one-letter code: Disintegrin gabonin-1 (128 aa).

The first 20 residues, 1 to 20, serve as a signal peptide directing secretion; it reads MIQVLLVIICLAVFPYQGSS. The propeptide occupies 21–47; sequence IILESGNVNDYEIVYPKKVTVLPTGAM. The 66-residue stretch at 47–112 folds into the Disintegrin domain; sequence MNSAHPCCDP…DCPRNPNKGE (66 aa). 4 disulfide bridges follow: Cys53-Cys76, Cys67-Cys73, Cys72-Cys97, and Cys85-Cys104. A Cell attachment site motif is present at residues 89–91; that stretch reads RGD. The interval 108–128 is disordered; the sequence is PNKGESDELEWSAAATGSVLM.

It belongs to the disintegrin family. Dimeric disintegrin subfamily. Heterodimer with bitisgabonin (bitisgabonin-1 is the name of the heterodimer); disulfide-linked. In terms of tissue distribution, expressed by the venom gland.

The protein localises to the secreted. In terms of biological role, the heterodimer bitisgabonin-1 is a potent inhibitor of the adhesion of the RGD-dependent integrin alpha-5/beta-1 (ITGA5/ITGB1) to immobilized fibronectin. In Bitis gabonica (Gaboon adder), this protein is Disintegrin gabonin-1.